Here is a 45-residue protein sequence, read N- to C-terminus: Photosystem II reaction center protein K (45 aa).

Positions Met-1–Ala-8 are excised as a propeptide. Residues Leu-24–Phe-44 traverse the membrane as a helical segment.

This sequence belongs to the PsbK family. As to quaternary structure, PSII is composed of 1 copy each of membrane proteins PsbA, PsbB, PsbC, PsbD, PsbE, PsbF, PsbH, PsbI, PsbJ, PsbK, PsbL, PsbM, PsbT, PsbX, PsbY, PsbZ, Psb30/Ycf12, peripheral proteins PsbO, CyanoQ (PsbQ), PsbU, PsbV and a large number of cofactors. It forms dimeric complexes.

It is found in the cellular thylakoid membrane. Functionally, one of the components of the core complex of photosystem II (PSII). PSII is a light-driven water:plastoquinone oxidoreductase that uses light energy to abstract electrons from H(2)O, generating O(2) and a proton gradient subsequently used for ATP formation. It consists of a core antenna complex that captures photons, and an electron transfer chain that converts photonic excitation into a charge separation. The sequence is that of Photosystem II reaction center protein K from Trichodesmium erythraeum (strain IMS101).